The sequence spans 446 residues: UDP-N-acetylmuramoylalanine--D-glutamate ligase (446 aa).

118–124 (GSNGKST) contacts ATP.

This sequence belongs to the MurCDEF family.

The protein resides in the cytoplasm. It carries out the reaction UDP-N-acetyl-alpha-D-muramoyl-L-alanine + D-glutamate + ATP = UDP-N-acetyl-alpha-D-muramoyl-L-alanyl-D-glutamate + ADP + phosphate + H(+). The protein operates within cell wall biogenesis; peptidoglycan biosynthesis. Functionally, cell wall formation. Catalyzes the addition of glutamate to the nucleotide precursor UDP-N-acetylmuramoyl-L-alanine (UMA). The sequence is that of UDP-N-acetylmuramoylalanine--D-glutamate ligase from Pseudoalteromonas translucida (strain TAC 125).